A 130-amino-acid chain; its full sequence is Small ribosomal subunit protein uS11 (130 aa).

Positions 109-130 are disordered; the sequence is EDITPIPHDGTGRPGGKRGRRV.

Belongs to the universal ribosomal protein uS11 family. Part of the 30S ribosomal subunit.

Functionally, located on the platform of the 30S subunit. The chain is Small ribosomal subunit protein uS11 from Methanobrevibacter smithii (strain ATCC 35061 / DSM 861 / OCM 144 / PS).